The chain runs to 137 residues: Global transcriptional regulator Spx (137 aa).

Cysteine 10 and cysteine 13 are joined by a disulfide.

The protein belongs to the ArsC family. Spx subfamily. In terms of assembly, interacts with the C-terminal domain of the alpha subunit of the RNAP.

It is found in the cytoplasm. Functionally, global transcriptional regulator that plays a key role in stress response and exerts either positive or negative regulation of genes. Acts by interacting with the C-terminal domain of the alpha subunit of the RNA polymerase (RNAP). This interaction can enhance binding of RNAP to the promoter region of target genes and stimulate their transcription, or block interaction of RNAP with activator. The polypeptide is Global transcriptional regulator Spx (Streptococcus mutans serotype c (strain ATCC 700610 / UA159)).